A 682-amino-acid chain; its full sequence is Heat shock 70 kDa protein 10, mitochondrial (682 aa).

A mitochondrion-targeting transit peptide spans 1–50; the sequence is MATAALLRSIRRREVVSSPFSAYRCLSSSGKASLNSSYLGQNFRSFSRAF. The interval 646–682 is disordered; sequence KIGEHMSGGSGGGSAPGGGSEGGSDQAPEAEYEEVKK. The segment covering 651 to 667 has biased composition (gly residues); that stretch reads MSGGSGGGSAPGGGSEG. Residues 673-682 are compositionally biased toward acidic residues; sequence PEAEYEEVKK.

Belongs to the heat shock protein 70 (TC 1.A.33) family. DnaK subfamily.

It localises to the mitochondrion. Chaperone involved in the maturation of iron-sulfur [Fe-S] cluster-containing proteins. Has a low intrinsic ATPase activity which is markedly stimulated by HSCB and ISU1. In cooperation with other chaperones, Hsp70s are key components that facilitate folding of de novo synthesized proteins, assist translocation of precursor proteins into organelles, and are responsible for degradation of damaged protein under stress conditions. The polypeptide is Heat shock 70 kDa protein 10, mitochondrial (Arabidopsis thaliana (Mouse-ear cress)).